Reading from the N-terminus, the 166-residue chain is NAD(P)H-quinone oxidoreductase subunit I, chloroplastic (166 aa).

4Fe-4S ferredoxin-type domains are found at residues 55–84 and 95–124; these read GRIH…VDWK and LNYS…MTEE. Cysteine 64, cysteine 67, cysteine 70, cysteine 74, cysteine 104, cysteine 107, cysteine 110, and cysteine 114 together coordinate [4Fe-4S] cluster.

It belongs to the complex I 23 kDa subunit family. As to quaternary structure, NDH is composed of at least 16 different subunits, 5 of which are encoded in the nucleus. [4Fe-4S] cluster is required as a cofactor.

Its subcellular location is the plastid. The protein localises to the chloroplast thylakoid membrane. It catalyses the reaction a plastoquinone + NADH + (n+1) H(+)(in) = a plastoquinol + NAD(+) + n H(+)(out). The enzyme catalyses a plastoquinone + NADPH + (n+1) H(+)(in) = a plastoquinol + NADP(+) + n H(+)(out). Its function is as follows. NDH shuttles electrons from NAD(P)H:plastoquinone, via FMN and iron-sulfur (Fe-S) centers, to quinones in the photosynthetic chain and possibly in a chloroplast respiratory chain. The immediate electron acceptor for the enzyme in this species is believed to be plastoquinone. Couples the redox reaction to proton translocation, and thus conserves the redox energy in a proton gradient. The chain is NAD(P)H-quinone oxidoreductase subunit I, chloroplastic from Steiractinia sodiroi.